Consider the following 53-residue polypeptide: Small, acid-soluble spore protein O (53 aa).

Residues 1–53 are disordered; that stretch reads MVRKKANHSRPGMNAAKAQGKDAGLTSQFHAEIGQEPLNQAQRQNNKKRKKNQ.

It belongs to the SspO family.

The protein localises to the spore core. In Halalkalibacterium halodurans (strain ATCC BAA-125 / DSM 18197 / FERM 7344 / JCM 9153 / C-125) (Bacillus halodurans), this protein is Small, acid-soluble spore protein O.